The sequence spans 427 residues: Enolase (427 aa).

Gln-163 provides a ligand contact to (2R)-2-phosphoglycerate. Residue Glu-205 is the Proton donor of the active site. Mg(2+)-binding residues include Asp-242, Glu-283, and Asp-310. (2R)-2-phosphoglycerate contacts are provided by Lys-335, Arg-364, Ser-365, and Lys-386. Lys-335 acts as the Proton acceptor in catalysis.

This sequence belongs to the enolase family. Mg(2+) is required as a cofactor.

It is found in the cytoplasm. The protein resides in the secreted. It localises to the cell surface. It catalyses the reaction (2R)-2-phosphoglycerate = phosphoenolpyruvate + H2O. It functions in the pathway carbohydrate degradation; glycolysis; pyruvate from D-glyceraldehyde 3-phosphate: step 4/5. Functionally, catalyzes the reversible conversion of 2-phosphoglycerate (2-PG) into phosphoenolpyruvate (PEP). It is essential for the degradation of carbohydrates via glycolysis. The protein is Enolase of Salinispora tropica (strain ATCC BAA-916 / DSM 44818 / JCM 13857 / NBRC 105044 / CNB-440).